The following is a 469-amino-acid chain: 3-isopropylmalate dehydratase large subunit (469 aa).

[4Fe-4S] cluster contacts are provided by Cys347, Cys408, and Cys411.

The protein belongs to the aconitase/IPM isomerase family. LeuC type 1 subfamily. In terms of assembly, heterodimer of LeuC and LeuD. It depends on [4Fe-4S] cluster as a cofactor.

The enzyme catalyses (2R,3S)-3-isopropylmalate = (2S)-2-isopropylmalate. The protein operates within amino-acid biosynthesis; L-leucine biosynthesis; L-leucine from 3-methyl-2-oxobutanoate: step 2/4. Its function is as follows. Catalyzes the isomerization between 2-isopropylmalate and 3-isopropylmalate, via the formation of 2-isopropylmaleate. This is 3-isopropylmalate dehydratase large subunit from Histophilus somni (strain 129Pt) (Haemophilus somnus).